The following is a 422-amino-acid chain: Aminopentol aminotransferase (422 aa).

Lysine 258 bears the N6-(pyridoxal phosphate)lysine mark.

The protein belongs to the class-III pyridoxal-phosphate-dependent aminotransferase family. The cofactor is pyridoxal 5'-phosphate.

The protein localises to the cytoplasm. The enzyme catalyses (2S,3S,5R,10R,12S,14S,15R,16R)-2-amino-12,16-dimethylicosane-3,5,10,14,15-pentol + pyruvate = (3S,5R,10R,12S,14S,15R,16R)-3,5,10,14,15-pentahydroxy-12,16-dimethylicosan-2-one + L-alanine. In terms of biological role, involved in degradation of fumonisin B1. Catalyzes the deamination of aminopentol (HFB1) to 2-keto-HFB1. Pyruvate is the preferred cosubstrate, but it can also use several other alpha-keto acids as amino group acceptors. This Sphingopyxis macrogoltabida (Sphingomonas macrogoltabidus) protein is Aminopentol aminotransferase (fumI).